The primary structure comprises 407 residues: S-adenosylmethionine synthase (407 aa).

Position 15 (His-15) interacts with ATP. Asp-17 serves as a coordination point for Mg(2+). Glu-43 lines the K(+) pocket. The L-methionine site is built by Glu-56 and Gln-99. The interval 99–109 is flexible loop; the sequence is QSPDIARGVDT. The tract at residues 112-131 is disordered; that stretch reads ERRGGGTAPGGPGDELDRQG. Residues 179-181, 252-253, Asp-261, 267-268, Ala-284, and Lys-288 contribute to the ATP site; these read DGK, RF, and RK. Asp-261 provides a ligand contact to L-methionine. Lys-292 is a binding site for L-methionine.

The protein belongs to the AdoMet synthase family. Homotetramer; dimer of dimers. Mg(2+) serves as cofactor. Requires K(+) as cofactor.

Its subcellular location is the cytoplasm. It catalyses the reaction L-methionine + ATP + H2O = S-adenosyl-L-methionine + phosphate + diphosphate. Its pathway is amino-acid biosynthesis; S-adenosyl-L-methionine biosynthesis; S-adenosyl-L-methionine from L-methionine: step 1/1. Functionally, catalyzes the formation of S-adenosylmethionine (AdoMet) from methionine and ATP. The overall synthetic reaction is composed of two sequential steps, AdoMet formation and the subsequent tripolyphosphate hydrolysis which occurs prior to release of AdoMet from the enzyme. The sequence is that of S-adenosylmethionine synthase from Streptomyces fradiae (Streptomyces roseoflavus).